The primary structure comprises 299 residues: Acetylglutamate kinase (299 aa).

Substrate contacts are provided by residues 72-73 (GG), R94, and N196.

The protein belongs to the acetylglutamate kinase family. ArgB subfamily.

The protein localises to the cytoplasm. The catalysed reaction is N-acetyl-L-glutamate + ATP = N-acetyl-L-glutamyl 5-phosphate + ADP. Its pathway is amino-acid biosynthesis; L-arginine biosynthesis; N(2)-acetyl-L-ornithine from L-glutamate: step 2/4. Catalyzes the ATP-dependent phosphorylation of N-acetyl-L-glutamate. This Burkholderia cenocepacia (strain ATCC BAA-245 / DSM 16553 / LMG 16656 / NCTC 13227 / J2315 / CF5610) (Burkholderia cepacia (strain J2315)) protein is Acetylglutamate kinase.